The primary structure comprises 99 residues: RNA-binding protein Hfq (99 aa).

Residues 9–68 form the Sm domain; it reads DPFLNALRRERVPVSIYLVNGIKLQGQIESFDQFVILLKNTVSQMVYKHAISTVVPSRPV. The tract at residues 64–99 is disordered; the sequence is PSRPVSHHSNNPGGGSNYHGNNTAASQQSQEADDAE.

It belongs to the Hfq family. As to quaternary structure, homohexamer.

Functionally, RNA chaperone that binds small regulatory RNA (sRNAs) and mRNAs to facilitate mRNA translational regulation in response to envelope stress, environmental stress and changes in metabolite concentrations. Also binds with high specificity to tRNAs. The sequence is that of RNA-binding protein Hfq from Pectobacterium carotovorum subsp. carotovorum (strain PC1).